A 256-amino-acid polypeptide reads, in one-letter code: Pimeloyl-[acyl-carrier protein] methyl ester esterase (256 aa).

The 228-residue stretch at 15-242 (HLVLLHGWGL…AAHAPFISHP (228 aa)) folds into the AB hydrolase-1 domain. Substrate contacts are provided by residues W22, 82-83 (SL), and 143-147 (FLALQ). The Nucleophile role is filled by S82. Residues D207 and H235 contribute to the active site. H235 lines the substrate pocket.

Belongs to the AB hydrolase superfamily. Carboxylesterase BioH family. As to quaternary structure, monomer.

It localises to the cytoplasm. The enzyme catalyses 6-carboxyhexanoyl-[ACP] methyl ester + H2O = 6-carboxyhexanoyl-[ACP] + methanol + H(+). It participates in cofactor biosynthesis; biotin biosynthesis. Functionally, the physiological role of BioH is to remove the methyl group introduced by BioC when the pimeloyl moiety is complete. It allows to synthesize pimeloyl-ACP via the fatty acid synthetic pathway through the hydrolysis of the ester bonds of pimeloyl-ACP esters. The protein is Pimeloyl-[acyl-carrier protein] methyl ester esterase of Escherichia coli O6:K15:H31 (strain 536 / UPEC).